Here is a 463-residue protein sequence, read N- to C-terminus: Mitochondrial dynamics protein MIEF1 (463 aa).

The Mitochondrial intermembrane portion of the chain corresponds to 1–23; the sequence is MAGAGERKGKKDDNGIGTAIDFV. The helical transmembrane segment at 24 to 46 threads the bilayer; it reads LSNARLVLGVGGAAMLGIATLAV. The Cytoplasmic portion of the chain corresponds to 47–463; sequence KRMYDRAISA…LSEPEVLLQT (417 aa). The interval 49–195 is dimerization; the sequence is MYDRAISAPT…LSGSLYDDLQ (147 aa). A phosphoserine mark is found at Ser-55, Ser-59, Ser-79, and Ser-94. The tract at residues 57–77 is disordered; that stretch reads PTSPTRLSHSGKRSWEEPNWM. A disordered region spans residues 96–123; that stretch reads QTLPTDSSTFDTDTFCPPRPKPVARKGQ. A compositionally biased stretch (low complexity) spans 100 to 110; that stretch reads TDSSTFDTDTF. Positions 160-169 are important for interaction with DNM1L; that stretch reads AAVDICAELR. Positions 187, 189, and 201 each coordinate ADP. An important for interaction with DNM1L region spans residues 234–242; that stretch reads RRENPEYFP. Positions 340, 342, and 368 each coordinate ADP.

The protein belongs to the SMCR7 family. Homodimer. Interacts with DNM1L. As to expression, expression is relatively high in heart, skeletal muscle, pancreas and kidney.

The protein resides in the mitochondrion outer membrane. Its function is as follows. Mitochondrial outer membrane protein which regulates mitochondrial fission/fusion dynamics. Promotes the recruitment and association of the fission mediator dynamin-related protein 1 (DNM1L) to the mitochondrial surface independently of the mitochondrial fission FIS1 and MFF proteins. Regulates DNM1L GTPase activity and DNM1L oligomerization. Binds ADP and can also bind GDP, although with lower affinity. Does not bind CDP, UDP, ATP, AMP or GTP. Inhibits DNM1L GTPase activity in the absence of bound ADP. Requires ADP to stimulate DNM1L GTPase activity and the assembly of DNM1L into long, oligomeric tubules with a spiral pattern, as opposed to the ring-like DNM1L oligomers observed in the absence of bound ADP. Does not require ADP for its function in recruiting DNM1L. In Homo sapiens (Human), this protein is Mitochondrial dynamics protein MIEF1.